A 322-amino-acid polypeptide reads, in one-letter code: MSQWFNQFYAAIAQSPLSHWLETLPAQLKHWQLEASHGDLPQWQKVLKNLPEVKTQHVDITSQVKIGTPGEMTDGEQKQTLHLLKRMMPWRKGPFSVHGIEIDTEWRSDWKWDRLLPHIEPLKGRTVLDIGCGSGYHLWRMRGEGAQFVVGIDPSDLFLCQFQAIKHFNPDENVHLLPLGVEALPELKAFDTVFSMGVLYHRRSPIDFLAQLKAQLRPGGELVLETLVIEGDENTVLVPTDRYAKMRNVWFIPSTAALKLWMERVGFKNVQIKDCAITTLDEQRKTAWMENESLVDFLDPNDTSKTIEGYPAPLRAILTAKA.

Carboxy-S-adenosyl-L-methionine-binding positions include lysine 92, tryptophan 106, lysine 111, glycine 131, 153–155 (DPS), 181–182 (VE), methionine 196, tyrosine 200, and arginine 315.

Belongs to the class I-like SAM-binding methyltransferase superfamily. CmoB family. In terms of assembly, homotetramer.

The enzyme catalyses carboxy-S-adenosyl-L-methionine + 5-hydroxyuridine(34) in tRNA = 5-carboxymethoxyuridine(34) in tRNA + S-adenosyl-L-homocysteine + H(+). Its function is as follows. Catalyzes carboxymethyl transfer from carboxy-S-adenosyl-L-methionine (Cx-SAM) to 5-hydroxyuridine (ho5U) to form 5-carboxymethoxyuridine (cmo5U) at position 34 in tRNAs. This chain is tRNA U34 carboxymethyltransferase, found in Pseudoalteromonas translucida (strain TAC 125).